Consider the following 66-residue polypeptide: COP-associated protein (66 aa).

An HMA domain is found at 1–66 (MKATFQVPSI…ALLDAGQEVV (66 aa)). Cu cation-binding residues include Cys-12 and Cys-15. An intrachain disulfide couples Cys-12 to Cys-15.

Functionally, part of a cation-transporting system which is associated with copper export out of the H.pylori cells. This is COP-associated protein (copP) from Helicobacter pylori (strain ATCC 700392 / 26695) (Campylobacter pylori).